The sequence spans 93 residues: Guanine nucleotide-binding protein subunit gamma 1 (93 aa).

A coiled-coil region spans residues 12–52; sequence TRGRHRIQAELKKLEQEARFLEEELEELDKTDKVSAALQEL. In terms of domain architecture, G protein gamma spans 20-93; it reads AELKKLEQEA…DLRRCKCWFL (74 aa). A lipid anchor (S-palmitoyl cysteine) is attached at C88. C90 is modified (cysteine methyl ester). The S-farnesyl cysteine moiety is linked to residue C90. The propeptide at 91-93 is removed in mature form; sequence WFL.

As to quaternary structure, g proteins are composed of 3 units, alpha, beta and gamma. Interacts with the beta subunit RGB1.

The protein resides in the cell membrane. In terms of biological role, guanine nucleotide-binding proteins (G proteins) are involved as modulators or transducers in various transmembrane signaling systems. This is Guanine nucleotide-binding protein subunit gamma 1 from Oryza sativa subsp. indica (Rice).